The primary structure comprises 124 residues: S-adenosylmethionine decarboxylase proenzyme (124 aa).

The active-site Schiff-base intermediate with substrate; via pyruvic acid is the Ser63. Ser63 carries the pyruvic acid (Ser); by autocatalysis modification. His68 serves as the catalytic Proton acceptor; for processing activity. Cys83 functions as the Proton donor; for catalytic activity in the catalytic mechanism.

It belongs to the prokaryotic AdoMetDC family. Type 1 subfamily. As to quaternary structure, heterotetramer of two alpha and two beta chains arranged as a dimer of alpha/beta heterodimers. The cofactor is pyruvate. In terms of processing, is synthesized initially as an inactive proenzyme. Formation of the active enzyme involves a self-maturation process in which the active site pyruvoyl group is generated from an internal serine residue via an autocatalytic post-translational modification. Two non-identical subunits are generated from the proenzyme in this reaction, and the pyruvate is formed at the N-terminus of the alpha chain, which is derived from the carboxyl end of the proenzyme. The post-translation cleavage follows an unusual pathway, termed non-hydrolytic serinolysis, in which the side chain hydroxyl group of the serine supplies its oxygen atom to form the C-terminus of the beta chain, while the remainder of the serine residue undergoes an oxidative deamination to produce ammonia and the pyruvoyl group blocking the N-terminus of the alpha chain.

The catalysed reaction is S-adenosyl-L-methionine + H(+) = S-adenosyl 3-(methylsulfanyl)propylamine + CO2. It participates in amine and polyamine biosynthesis; S-adenosylmethioninamine biosynthesis; S-adenosylmethioninamine from S-adenosyl-L-methionine: step 1/1. In terms of biological role, catalyzes the decarboxylation of S-adenosylmethionine to S-adenosylmethioninamine (dcAdoMet), the propylamine donor required for the synthesis of the polyamines spermine and spermidine from the diamine putrescine. This chain is S-adenosylmethionine decarboxylase proenzyme, found in Anoxybacillus flavithermus (strain DSM 21510 / WK1).